Reading from the N-terminus, the 79-residue chain is Reactive oxygen species modulator 1 (79 aa).

The chain crosses the membrane as a helical span at residues 22–44; it reads GFVMGCAVGMAAGALFGPFSCLR. The sufficient for antibacterial activity stretch occupies residues 42–60; the sequence is CLRIGMRGRELMGGIGKTM.

Belongs to the MGR2 family.

The protein resides in the mitochondrion inner membrane. Has antibacterial activity against a variety of bacteria including S.aureus, P.aeruginosa and M.tuberculosis. Acts by inducing bacterial membrane breakage. Its function is as follows. Induces production of reactive oxygen species (ROS) which are necessary for cell proliferation. May play a role in inducing oxidative DNA damage and replicative senescence. May play a role in the coordination of mitochondrial morphology and cell proliferation. The protein is Reactive oxygen species modulator 1 (ROMO1) of Sus scrofa (Pig).